Consider the following 51-residue polypeptide: Sperm protamine P1 (51 aa).

Disulfide bonds link Cys7/Cys15 and Cys40/Cys48.

Belongs to the protamine P1 family. Cross-linked by interchain disulfide bonds around the DNA-helix. In terms of tissue distribution, testis.

It is found in the nucleus. The protein resides in the chromosome. Its function is as follows. Protamines substitute for histones in the chromatin of sperm during the haploid phase of spermatogenesis. They compact sperm DNA into a highly condensed, stable and inactive complex. The protein is Sperm protamine P1 (PRM1) of Capra hircus (Goat).